The following is a 236-amino-acid chain: CD81 antigen (236 aa).

At 1-12 the chain is on the cytoplasmic side; the sequence is MGVEGCTKCIKY. A helical transmembrane segment spans residues 13–33; it reads LLFVFNFVFWLAGGVILGVAL. Topologically, residues 34 to 63 are extracellular; that stretch reads WLRHDPQTTSLLYLELGNKPAPNTFYVGIY. Residues 64–84 traverse the membrane as a helical segment; sequence ILIAVGAVMMFVGFLGCYGAI. Residues 85–89 are Cytoplasmic-facing; sequence QESQC. A helical transmembrane segment spans residues 90–112; that stretch reads LLGTFFTCLVILFACEVAAGIWG. Residues 113–201 lie on the Extracellular side of the membrane; it reads FVNKDQIAKD…QKIDELFSGK (89 aa). Cystine bridges form between Cys-156–Cys-190 and Cys-157–Cys-175. A helical transmembrane segment spans residues 202 to 224; that stretch reads LYLIGIAAIVVAVIMIFEMILSM. A cholesterol-binding site is contributed by Glu-219. Residues 225–236 lie on the Cytoplasmic side of the membrane; the sequence is VLCCGIRNSSVY.

Belongs to the tetraspanin (TM4SF) family. As to quaternary structure, homodimer. Part of a complex composed of CD19, CR2/CD21, CD81 and IFITM1/CD225 in the membrane of mature B cells. Interacts (via the second extracellular domain) with CD19; this interaction is initiated early during biosynthesis in the ER and enables trafficking of only properly folded CD19. Part of a complex that includes MHC class II/HLA-DR molecules and IFITM1. Interacts with IFITM1. Interacts with IFITM2 and IFITM3. Part of integrin-tetraspanin complex composed of CD9, CD81, beta-1 and beta-2 integrins in the membrane of monocyte/macrophages. Interacts (via the second extracellular domain) with integrin ITGAV:ITGB3. Interacts with CD247/CD3 zeta, ICAM1 and CD9 at the immune synapse on T cell membrane. Part of a GPCR-tetraspanin complex consisting at least of ADGRG1, CD81, possibly CD9, and GNA11 in which CD81 enhances the association of ADGRG1 with GNA11. Part of a complex composed of CD9, CD81, PTGFRN and IGSF8. Interacts directly with IGSF8. Interacts with CD53 and SCIMP. Interacts with SAMHD1 (via its C-terminus). Interacts with glypican GPC3 and with the transcriptional repressor HHEX; binding to GPC3 decreases the availability of free CD81 for binding to HHEX, resulting in nuclear translocation of HHEX and transcriptional repression. Interacts with CLDN1. Interacts with CLDN6 and CLDN9. In terms of processing, not glycosylated. Likely constitutively palmitoylated at low levels. Protein palmitoylation is up-regulated upon coligation of BCR and CD9-C2R-CD81 complexes in lipid rafts. Expressed in oocytes (at protein level). Highly expressed in granulosa cells. Expressed in skeletal muscle mainly in endothelial cells of endomysial capillaries, in satellite cells and myoblasts (at protein level). Expressed in hepatocytes (at protein level).

It is found in the cell membrane. The protein resides in the basolateral cell membrane. Functionally, structural component of specialized membrane microdomains known as tetraspanin-enriched microdomains (TERMs), which act as platforms for receptor clustering and signaling. Essential for trafficking and compartmentalization of CD19 receptor on the cell surface of activated B cells. Upon initial encounter with a microbial pathogen, enables the assembly of CD19-CR2 and B cell receptor complexes at signaling TERMs, lowering the threshold dose of antigen required to trigger B cell clonal expansion and humoral immune response. In T cells, associates with CD4 or CD8 coreceptors and defines the maturation state of antigen-induced synapses with B cells. Facilitates localization of CD3 in these immune synapses, required for costimulation and sustained activation of T cells, preferentially triggering T helper type 2 immune response. Can act both as positive and negative regulator of homotypic or heterotypic cell-cell fusion processes. In myoblasts, associates with another tetraspanin CD9 in complex with PTGFRN and inhibits myotube fusion during muscle regeneration. In macrophages, associates with CD9 and beta-1 and beta-2 integrins, and prevents macrophage fusion into multinucleated giant cells specialized in ingesting complement-opsonized large particles. Also prevents the fusion between mononuclear cell progenitors into osteoclasts in charge of bone resorption. Positively regulates sperm-egg fusion and may be involved in the acrosome reaction. Regulates protein trafficking in intracellular compartments. In T cells, associates with dNTPase SAMHD1 and defines its subcellular location, enabling its degradation by the proteasome and thereby controlling intracellular dNTP levels. Also regulates integrin-dependent migration of macrophages, particularly relevant for inflammatory response in the lung. Its function is as follows. (Microbial infection) Specifically required for Plasmodium yoelii infectivity of hepatocytes, controlling sporozoite entry in hepatocytes via the parasitophorous vacuole and subsequent parasite differentiation to exoerythrocytic forms. In Mus musculus (Mouse), this protein is CD81 antigen.